We begin with the raw amino-acid sequence, 366 residues long: Tubulin-like protein CetZ (366 aa).

GTP-binding positions include 10–14 (QCGTK), 103–105 (GTG), E136, N163, and N181.

This sequence belongs to the CetZ family.

Its subcellular location is the cytoplasm. Involved in cell shape control. The polypeptide is Tubulin-like protein CetZ (Pyrococcus furiosus (strain ATCC 43587 / DSM 3638 / JCM 8422 / Vc1)).